Here is a 174-residue protein sequence, read N- to C-terminus: Shikimate kinase 2 (174 aa).

Residue 12-17 coordinates ATP; that stretch reads GCGKTT. Residues T16 and D32 each contribute to the Mg(2+) site. Positions 34, 58, and 79 each coordinate substrate. The segment at 112-126 is LID domain; it reads EAFPEEGQRPTLTGK. R120 serves as a coordination point for ATP. A substrate-binding site is contributed by R139. Position 155 (Q155) interacts with ATP.

It belongs to the shikimate kinase family. AroL subfamily. As to quaternary structure, monomer. Mg(2+) is required as a cofactor.

Its subcellular location is the cytoplasm. It catalyses the reaction shikimate + ATP = 3-phosphoshikimate + ADP + H(+). Its pathway is metabolic intermediate biosynthesis; chorismate biosynthesis; chorismate from D-erythrose 4-phosphate and phosphoenolpyruvate: step 5/7. In terms of biological role, catalyzes the specific phosphorylation of the 3-hydroxyl group of shikimic acid using ATP as a cosubstrate. The protein is Shikimate kinase 2 of Enterobacter sp. (strain 638).